Consider the following 708-residue polypeptide: ABC transporter G family member 18 (708 aa).

Positions 75 to 317 (RRRFDFSRRK…FSSFGRPIPE (243 aa)) constitute an ABC transporter domain. Residue 109-116 (GGSGAGKS) participates in ATP binding. An ABC transmembrane type-2 domain is found at 402–612 (AETFILAKRY…PYEAVLINEF (211 aa)). The next 7 helical transmembrane spans lie at 421 to 441 (LIGM…TVYW), 456 to 476 (FFAF…PVFI), 508 to 528 (LLAL…LSGG), 537 to 557 (LIIY…SGLI), 560 to 580 (VMMS…LGGF), 589 to 609 (LYWI…AVLI), and 681 to 701 (LWIT…SLLF).

It belongs to the ABC transporter superfamily. ABCG family. Eye pigment precursor importer (TC 3.A.1.204) subfamily.

It is found in the membrane. In Arabidopsis thaliana (Mouse-ear cress), this protein is ABC transporter G family member 18 (ABCG18).